A 494-amino-acid polypeptide reads, in one-letter code: Chromosomal replication initiator protein DnaA (494 aa).

The interval 1-103 (MTTDPDPPFV…PVSDESDSGS (103 aa)) is domain I, interacts with DnaA modulators. The interval 94–117 (PVSDESDSGSVASPAPVAAADPDD) is disordered. Residues 101–113 (SGSVASPAPVAAA) show a composition bias toward low complexity. A domain II region spans residues 104 to 153 (VASPAPVAAADPDDDVVDDDLAARASAEESWPSYFTNRANRAAEDDATSV). The segment at 154 to 370 (NLNRRYTFDT…GALIRVTAFA (217 aa)) is domain III, AAA+ region. 4 residues coordinate ATP: G198, G200, K201, and T202. The tract at residues 371-494 (SLNKTPIDKS…TTRIRQRAKR (124 aa)) is domain IV, binds dsDNA.

It belongs to the DnaA family. As to quaternary structure, oligomerizes as a right-handed, spiral filament on DNA at oriC.

Its subcellular location is the cytoplasm. Functionally, plays an essential role in the initiation and regulation of chromosomal replication. ATP-DnaA binds to the origin of replication (oriC) to initiate formation of the DNA replication initiation complex once per cell cycle. Binds the DnaA box (a 9 base pair repeat at the origin) and separates the double-stranded (ds)DNA. Forms a right-handed helical filament on oriC DNA; dsDNA binds to the exterior of the filament while single-stranded (ss)DNA is stabiized in the filament's interior. The ATP-DnaA-oriC complex binds and stabilizes one strand of the AT-rich DNA unwinding element (DUE), permitting loading of DNA polymerase. After initiation quickly degrades to an ADP-DnaA complex that is not apt for DNA replication. Binds acidic phospholipids. This chain is Chromosomal replication initiator protein DnaA, found in Mycolicibacterium vanbaalenii (strain DSM 7251 / JCM 13017 / BCRC 16820 / KCTC 9966 / NRRL B-24157 / PYR-1) (Mycobacterium vanbaalenii).